The chain runs to 182 residues: UPF0397 protein VS_II0189 (182 aa).

Helical transmembrane passes span 8-28 (VVVIAIGAALYGIGGLPMFGV), 41-61 (AVLALFSVLFGPIVGFLVGFI), 72-92 (WGVWLTWVLGSGIVGMVIGLF), 110-130 (FALFVVLALAGNVVGYGSSAF), and 146-166 (QLSIIAAGNTILIAVVGFLIL).

The protein belongs to the UPF0397 family.

The protein localises to the cell membrane. The polypeptide is UPF0397 protein VS_II0189 (Vibrio atlanticus (strain LGP32) (Vibrio splendidus (strain Mel32))).